The following is a 140-amino-acid chain: uncharacterized protein (140 aa).

A run of 2 helical transmembrane segments spans residues 63–83 (LGFV…TLAT) and 119–139 (ILLY…IFIN).

Its subcellular location is the membrane. This is an uncharacterized protein from Schizosaccharomyces pombe (strain 972 / ATCC 24843) (Fission yeast).